The primary structure comprises 356 residues: Guanine nucleotide-binding protein alpha-2 subunit (356 aa).

The N-myristoyl glycine moiety is linked to residue G2. C4 carries S-palmitoyl cysteine lipidation. In terms of domain architecture, G-alpha spans 35-356 (REVKLLLLGA…LTNNLRDIVL (322 aa)). A G1 motif region spans residues 38-51 (KLLLLGAGESGKST). Residues E46, S47, G48, K49, S50, T51, D153, L178, T184, G206, N272, K273, D275, and A329 each contribute to the GTP site. S50 contributes to the Mg(2+) binding site. Residues 176 to 184 (DILRCRNKT) form a G2 motif region. Residue T184 participates in Mg(2+) binding. Positions 199–208 (YRIFDVGGQR) are G3 motif. The segment at 268–275 (ILFLNKVD) is G4 motif. Residues 327-332 (TNATDV) form a G5 motif region.

The protein belongs to the G-alpha family. G proteins are composed of 3 units; alpha, beta and gamma. The alpha chain contains the guanine nucleotide binding site. It depends on Mg(2+) as a cofactor.

Functionally, guanine nucleotide-binding proteins (G proteins) are involved as modulators or transducers in various transmembrane signaling systems. The protein is Guanine nucleotide-binding protein alpha-2 subunit (GPA2) of Mycosarcoma maydis (Corn smut fungus).